Consider the following 394-residue polypeptide: Tryptophan synthase beta chain (394 aa).

An N6-(pyridoxal phosphate)lysine modification is found at Lys-90.

Belongs to the TrpB family. As to quaternary structure, tetramer of two alpha and two beta chains. The cofactor is pyridoxal 5'-phosphate.

It carries out the reaction (1S,2R)-1-C-(indol-3-yl)glycerol 3-phosphate + L-serine = D-glyceraldehyde 3-phosphate + L-tryptophan + H2O. It participates in amino-acid biosynthesis; L-tryptophan biosynthesis; L-tryptophan from chorismate: step 5/5. Functionally, the beta subunit is responsible for the synthesis of L-tryptophan from indole and L-serine. In Bacteroides thetaiotaomicron (strain ATCC 29148 / DSM 2079 / JCM 5827 / CCUG 10774 / NCTC 10582 / VPI-5482 / E50), this protein is Tryptophan synthase beta chain.